Consider the following 464-residue polypeptide: Probable 1,4-beta-D-glucan cellobiohydrolase C (464 aa).

An N-terminal signal peptide occupies residues 1–19 (MKNFAPSLALSLLLPTVQA). Residues 20-55 (QQTMWGQCGGAGWSGATDCVAGGVCSTQNAYYAQCL) enclose the CBM1 domain. Disulfide bonds link Cys27–Cys44 and Cys38–Cys54. The tract at residues 59–102 (TTATTLSTTSKGTTTTTTSSTTSTGGGSSSTTTKTSTSAGPTVT) is thr-rich linker. The segment covering 65–100 (STTSKGTTTTTTSSTTSTGGGSSSTTTKTSTSAGPT) has biased composition (low complexity). Residues 65–108 (STTSKGTTTTTTSSTTSTGGGSSSTTTKTSTSAGPTVTGSPSGN) form a disordered region. The tract at residues 103–464 (GSPSGNPFSG…QLLTNANPAF (362 aa)) is catalytic. Asp194 is an active-site residue. Cystine bridges form between Cys195/Cys254 and Cys386/Cys433. Asp240 (proton donor) is an active-site residue. Asp419 serves as the catalytic Nucleophile.

Belongs to the glycosyl hydrolase 6 (cellulase B) family.

It localises to the secreted. The enzyme catalyses Hydrolysis of (1-&gt;4)-beta-D-glucosidic linkages in cellulose and cellotetraose, releasing cellobiose from the non-reducing ends of the chains.. Its function is as follows. The biological conversion of cellulose to glucose generally requires three types of hydrolytic enzymes: (1) Endoglucanases which cut internal beta-1,4-glucosidic bonds; (2) Exocellobiohydrolases that cut the disaccharide cellobiose from the non-reducing end of the cellulose polymer chain; (3) Beta-1,4-glucosidases which hydrolyze the cellobiose and other short cello-oligosaccharides to glucose. This chain is Probable 1,4-beta-D-glucan cellobiohydrolase C (cbhC), found in Aspergillus clavatus (strain ATCC 1007 / CBS 513.65 / DSM 816 / NCTC 3887 / NRRL 1 / QM 1276 / 107).